The following is a 703-amino-acid chain: NADH-quinone oxidoreductase chain 12 (703 aa).

Helical transmembrane passes span 4–24 (FVLF…RAIG), 30–50 (YLTT…FLSF), 79–99 (LTAI…MYSL), 116–136 (ARFF…VTAD), 138–158 (LLQM…LIGF), 179–199 (GDFG…SVQF), 224–244 (ANLL…QLLL), 256–276 (TPVS…FLVC), 290–310 (NFIV…GLVQ), 325–345 (LGYM…FHLL), 346–366 (THAF…HAMH), 381–401 (IPLT…VGIP), 415–435 (AIIE…VIAA), 475–495 (LGVL…PFFG), 580–600 (VSPF…YIAN), and 679–699 (LFHY…WVMM).

The protein belongs to the complex I subunit 5 family. In terms of assembly, NDH-1 is composed of at least 14 different subunits, Nqo1 to Nqo14. The complex has a L-shaped structure, with the hydrophobic arm (subunits Nqo7, Nqo8, Nqo10 to Nqo14) embedded in the inner membrane and the hydrophilic peripheral arm (subunits Nqo1 to Nqo6, Nqo9) protruding into the bacterial cytoplasm. The hydrophilic domain contains all the redox centers.

It localises to the cell inner membrane. The catalysed reaction is a quinone + NADH + 5 H(+)(in) = a quinol + NAD(+) + 4 H(+)(out). NDH-1 shuttles electrons from NADH, via FMN and iron-sulfur (Fe-S) centers, to quinones in the respiratory chain. The immediate electron acceptor for the enzyme in this species is believed to be ubiquinone. Couples the redox reaction to proton translocation (for every two electrons transferred, four hydrogen ions are translocated across the cytoplasmic membrane), and thus conserves the redox energy in a proton gradient. This chain is NADH-quinone oxidoreductase chain 12, found in Paracoccus denitrificans.